The sequence spans 292 residues: [LysW]-aminoadipate kinase (292 aa).

Residues Arg-89 and Asn-193 each contribute to the substrate site.

The protein belongs to the acetylglutamate kinase family. LysZ subfamily.

It is found in the cytoplasm. The enzyme catalyses [amino-group carrier protein]-C-terminal-N-(1,4-dicarboxybutan-1-yl)-L-glutamine + ATP = [amino-group carrier protein]-C-terminal-N-(1-carboxy-5-phosphooxy-5-oxopentan-1-yl)-L-glutamine + ADP. It participates in amino-acid biosynthesis; L-lysine biosynthesis via AAA pathway; L-lysine from L-alpha-aminoadipate (Thermus route): step 2/5. Catalyzes the phosphorylation of LysW-gamma-alpha-aminoadipate. In Deinococcus radiodurans (strain ATCC 13939 / DSM 20539 / JCM 16871 / CCUG 27074 / LMG 4051 / NBRC 15346 / NCIMB 9279 / VKM B-1422 / R1), this protein is [LysW]-aminoadipate kinase.